A 379-amino-acid polypeptide reads, in one-letter code: Pectin lyase A (379 aa).

An N-terminal signal peptide occupies residues 1–20 (MKYSTIFSAAAAVFAGSAAA). Intrachain disulfides connect Cys83–Cys102 and Cys92–Cys226. Thr88 carries an O-linked (Man) threonine glycan. A glycan (N-linked (GlcNAc...) asparagine) is linked at Asn129. Arg256 is a catalytic residue. Residues Cys322 and Cys330 are joined by a disulfide bond. O-linked (Man) serine; in strain 4M-147 glycosylation occurs at Ser368.

The protein belongs to the polysaccharide lyase 1 family. In terms of processing, N-glycosylated at Asn-129 and O-glycosylated at Thr-88 when expressed in Aspergillus nidulans. The protein from strain 4M-147 is O-glycosylated at Thr-88 and Ser-368. PubMed:9195887 modeled GalNAc at the O-glycosylation site, a glycosylation not observed in fungi. The O-linked saccharide is probably mannose.

The protein localises to the secreted. It catalyses the reaction Eliminative cleavage of (1-&gt;4)-alpha-D-galacturonan methyl ester to give oligosaccharides with 4-deoxy-6-O-methyl-alpha-D-galact-4-enuronosyl groups at their non-reducing ends.. Its function is as follows. Pectinolytic enzymes consist of four classes of enzymes: pectin lyase, polygalacturonase, pectin methylesterase and rhamnogalacturonase. Among pectinolytic enzymes, pectin lyase is the most important in depolymerization of pectin, since it cleaves internal glycosidic bonds of highly methylated pectins. This chain is Pectin lyase A (pelA), found in Aspergillus niger.